The sequence spans 594 residues: Dual specificity protein phosphatase CDC14A (594 aa).

The segment at 7–162 (ELIGACEFMK…GLQHGFFDFE (156 aa)) is a. The interval 163–176 (TFDVDEYEHYERVE) is linker. Residues 177–343 (NGDFNWIVPG…QGDIFRSKLK (167 aa)) form a b region. The Tyrosine-protein phosphatase domain maps to 179-336 (DFNWIVPGKF…KQASLWVQGD (158 aa)). Catalysis depends on cysteine 278, which acts as the Phosphocysteine intermediate. Residues 396 to 435 (GDKLRALKSQRQPRTSPSCAFRSDDTKGHPRAVSQPFRLS) form a disordered region. Over residues 404-413 (SQRQPRTSPS) the composition is skewed to polar residues. Phosphoserine is present on serine 484. The interval 487–560 (NLNAATDDPE…PGPHSAKTEE (74 aa)) is disordered. Over residues 500–531 (TSSSSKAGFTASPFTNLLNGSSQPTTRNYPEL) the composition is skewed to polar residues. A compositionally biased stretch (low complexity) spans 532-549 (NNNQYNRSSNSNGGNLNS). A Phosphoserine modification is found at serine 583.

The protein belongs to the protein-tyrosine phosphatase family. Non-receptor class CDC14 subfamily. In terms of assembly, interacts with KIF20A, which is required to localize CDC14 to the midzone of the mitotic spindle.

It is found in the nucleus. Its subcellular location is the cytoplasm. The protein localises to the cytoskeleton. It localises to the microtubule organizing center. The protein resides in the centrosome. It is found in the spindle pole. Its subcellular location is the spindle. The protein localises to the cell projection. It localises to the kinocilium. The protein resides in the stereocilium. The catalysed reaction is O-phospho-L-tyrosyl-[protein] + H2O = L-tyrosyl-[protein] + phosphate. The enzyme catalyses O-phospho-L-seryl-[protein] + H2O = L-seryl-[protein] + phosphate. It carries out the reaction O-phospho-L-threonyl-[protein] + H2O = L-threonyl-[protein] + phosphate. Its function is as follows. Dual-specificity phosphatase. Required for centrosome separation and productive cytokinesis during cell division. Dephosphorylates SIRT2 around early anaphase. May dephosphorylate the APC subunit FZR1/CDH1, thereby promoting APC-FZR1 dependent degradation of mitotic cyclins and subsequent exit from mitosis. Required for normal hearing. This chain is Dual specificity protein phosphatase CDC14A (CDC14A), found in Homo sapiens (Human).